A 182-amino-acid chain; its full sequence is Doublesex- and mab-3-related transcription factor C1 (182 aa).

A Phosphoserine modification is found at Thr15. Polar residues predominate over residues 26–39 (AQVDTATQEESSQG). Disordered stretches follow at residues 26–48 (AQVDTATQEESSQGPVLLNQHPE) and 136–174 (QTRHQPCGMPGTAGERGLQLANPSMPPRPTSSGSLPSGH).

This sequence belongs to the DMRT family. As to expression, expressed in Sertoli cells in male testis.

This chain is Doublesex- and mab-3-related transcription factor C1 (Dmrtc1), found in Mus musculus (Mouse).